The following is a 337-amino-acid chain: Anthranilate phosphoribosyltransferase (337 aa).

5-phospho-alpha-D-ribose 1-diphosphate is bound by residues Gly-81, 84–85, Ser-89, 91–94, 109–117, and Ala-121; these read GD, NVST, and KHGNRALSS. Gly-81 serves as a coordination point for anthranilate. Ser-93 lines the Mg(2+) pocket. Residue Asn-112 participates in anthranilate binding. Arg-167 contributes to the anthranilate binding site. Mg(2+) contacts are provided by Asp-226 and Glu-227.

Belongs to the anthranilate phosphoribosyltransferase family. Homodimer. Mg(2+) serves as cofactor.

It carries out the reaction N-(5-phospho-beta-D-ribosyl)anthranilate + diphosphate = 5-phospho-alpha-D-ribose 1-diphosphate + anthranilate. Its pathway is amino-acid biosynthesis; L-tryptophan biosynthesis; L-tryptophan from chorismate: step 2/5. In terms of biological role, catalyzes the transfer of the phosphoribosyl group of 5-phosphorylribose-1-pyrophosphate (PRPP) to anthranilate to yield N-(5'-phosphoribosyl)-anthranilate (PRA). This is Anthranilate phosphoribosyltransferase from Bradyrhizobium diazoefficiens (strain JCM 10833 / BCRC 13528 / IAM 13628 / NBRC 14792 / USDA 110).